The following is a 112-amino-acid chain: Integration host factor subunit alpha (112 aa).

The protein belongs to the bacterial histone-like protein family. As to quaternary structure, heterodimer of an alpha and a beta chain.

Functionally, this protein is one of the two subunits of integration host factor, a specific DNA-binding protein that functions in genetic recombination as well as in transcriptional and translational control. The chain is Integration host factor subunit alpha from Sinorhizobium medicae (strain WSM419) (Ensifer medicae).